The following is a 398-amino-acid chain: Succinate--CoA ligase [ADP-forming] subunit beta (398 aa).

The 246-residue stretch at 9-254 folds into the ATP-grasp domain; the sequence is KALLKSYGAP…TTEEDEKEIE (246 aa). ATP contacts are provided by residues Lys-46, 53 to 55, Glu-109, Ala-112, and Glu-117; that span reads GRG. Mg(2+) contacts are provided by Asn-209 and Asp-223. Residues Asn-274 and 331–333 each bind substrate; that span reads GIM.

This sequence belongs to the succinate/malate CoA ligase beta subunit family. In terms of assembly, heterotetramer of two alpha and two beta subunits. Mg(2+) is required as a cofactor.

It catalyses the reaction succinate + ATP + CoA = succinyl-CoA + ADP + phosphate. The enzyme catalyses GTP + succinate + CoA = succinyl-CoA + GDP + phosphate. The protein operates within carbohydrate metabolism; tricarboxylic acid cycle; succinate from succinyl-CoA (ligase route): step 1/1. Functionally, succinyl-CoA synthetase functions in the citric acid cycle (TCA), coupling the hydrolysis of succinyl-CoA to the synthesis of either ATP or GTP and thus represents the only step of substrate-level phosphorylation in the TCA. The beta subunit provides nucleotide specificity of the enzyme and binds the substrate succinate, while the binding sites for coenzyme A and phosphate are found in the alpha subunit. The sequence is that of Succinate--CoA ligase [ADP-forming] subunit beta from Sinorhizobium medicae (strain WSM419) (Ensifer medicae).